The chain runs to 121 residues: Basic phospholipase A2 homolog BnSP-7 (121 aa).

7 disulfide bridges follow: cysteine 26-cysteine 115, cysteine 28-cysteine 44, cysteine 43-cysteine 95, cysteine 49-cysteine 121, cysteine 50-cysteine 88, cysteine 57-cysteine 81, and cysteine 75-cysteine 86. Positions 105–117 (KKYRYHLKPFCKK) are important for membrane-damaging activities in eukaryotes and bacteria; heparin-binding.

This sequence belongs to the phospholipase A2 family. Group II subfamily. K49 sub-subfamily. Homodimer; non-covalently linked (probable alternative/compact dimer conformation in solution). In terms of tissue distribution, expressed by the venom gland.

It is found in the secreted. With respect to regulation, heparin inhibits the neuromuscular effect, myotoxin activity and edema-inducing effects. Bromophenacyl bromide (BPB) inhibits the neuromuscular effect, the myotoxin activity and edema-inducing effects. Functionally, snake venom phospholipase A2 (PLA2) that lacks enzymatic activity. Is myotoxic and displays edema-inducing activity. Displays bactericidal activity and promotes the blockage of the neuromuscular contraction of the chick biventer cervicis muscle. Also disrupts artificial membranes, and provokes tissue damages characterized by edema, necrosis and inflammation. May act as pro-inflammatory mediators, inducing metalloproteinase and cytokine production from the inflammatory and satellite cells. A model of myotoxic mechanism has been proposed: an apo Lys49-PLA2 is activated by the entrance of a hydrophobic molecule (e.g. fatty acid) at the hydrophobic channel of the protein leading to a reorientation of a monomer. This reorientation causes a transition between 'inactive' to 'active' states, causing alignment of C-terminal and membrane-docking sites (MDoS) side-by-side and putting the membrane-disruption sites (MDiS) in the same plane, exposed to solvent and in a symmetric position for both monomers. The MDoS region stabilizes the toxin on membrane by the interaction of charged residues with phospholipid head groups. Subsequently, the MDiS region destabilizes the membrane with penetration of hydrophobic residues. This insertion causes a disorganization of the membrane, allowing an uncontrolled influx of ions (i.e. calcium and sodium), and eventually triggering irreversible intracellular alterations and cell death. This chain is Basic phospholipase A2 homolog BnSP-7, found in Bothrops pauloensis (Neuwied's lancehead).